The sequence spans 1141 residues: Isoleucine--tRNA ligase (1141 aa).

A 'HIGH' region motif is present at residues 50–60 (PSANGMPGIHH). Residues 689 to 693 (KMSKR) carry the 'KMSKS' region motif. K692 contributes to the ATP binding site.

It belongs to the class-I aminoacyl-tRNA synthetase family. IleS type 2 subfamily. In terms of assembly, monomer. Requires Zn(2+) as cofactor.

It localises to the cytoplasm. It catalyses the reaction tRNA(Ile) + L-isoleucine + ATP = L-isoleucyl-tRNA(Ile) + AMP + diphosphate. Its function is as follows. Catalyzes the attachment of isoleucine to tRNA(Ile). As IleRS can inadvertently accommodate and process structurally similar amino acids such as valine, to avoid such errors it has two additional distinct tRNA(Ile)-dependent editing activities. One activity is designated as 'pretransfer' editing and involves the hydrolysis of activated Val-AMP. The other activity is designated 'posttransfer' editing and involves deacylation of mischarged Val-tRNA(Ile). In Bacteroides fragilis (strain YCH46), this protein is Isoleucine--tRNA ligase.